We begin with the raw amino-acid sequence, 100 residues long: Putative sodium channel toxin Ts26 (100 aa).

A signal peptide spans 1-22 (MVKSAMKIVILILFVLLIRVES). The 69-residue stretch at 24–92 (RNGYPDISDG…VMDTTIEYCE (69 aa)) folds into the LCN-type CS-alpha/beta domain. Disulfide bonds link cysteine 38–cysteine 64, cysteine 50–cysteine 69, cysteine 54–cysteine 71, and cysteine 65–cysteine 91.

This sequence belongs to the long (4 C-C) scorpion toxin superfamily. Sodium channel inhibitor family. As to expression, expressed by the venom gland.

The protein localises to the secreted. Functionally, putative sodium channel toxin. The sequence is that of Putative sodium channel toxin Ts26 from Tityus serrulatus (Brazilian scorpion).